A 257-amino-acid polypeptide reads, in one-letter code: Hydroxyacylglutathione hydrolase (257 aa).

Residues H54, H56, D58, H59, H113, D137, and H175 each contribute to the Zn(2+) site.

Belongs to the metallo-beta-lactamase superfamily. Glyoxalase II family. In terms of assembly, monomer. Zn(2+) serves as cofactor.

It catalyses the reaction an S-(2-hydroxyacyl)glutathione + H2O = a 2-hydroxy carboxylate + glutathione + H(+). Its pathway is secondary metabolite metabolism; methylglyoxal degradation; (R)-lactate from methylglyoxal: step 2/2. Thiolesterase that catalyzes the hydrolysis of S-D-lactoyl-glutathione to form glutathione and D-lactic acid. The sequence is that of Hydroxyacylglutathione hydrolase from Microcystis aeruginosa (strain NIES-843 / IAM M-2473).